The primary structure comprises 496 residues: Polyphosphate:AMP phosphotransferase (496 aa).

PPK2 regions lie at residues 11–234 (IDKD…LQAA) and 269–495 (LDKD…YKKD).

It belongs to the polyphosphate kinase 2 (PPK2) family. Class II subfamily. As to quaternary structure, homodimer. Mg(2+) serves as cofactor.

It catalyses the reaction [phosphate](n) + ADP = [phosphate](n+1) + AMP. In terms of biological role, uses inorganic polyphosphate (polyP) as a donor to convert AMP to ADP. Can also convert GMP to GDP, with lower efficiency. Cannot dephosphorylate ADP in the presence of polyP. This Pseudomonas aeruginosa (strain ATCC 15692 / DSM 22644 / CIP 104116 / JCM 14847 / LMG 12228 / 1C / PRS 101 / PAO1) protein is Polyphosphate:AMP phosphotransferase.